Consider the following 201-residue polypeptide: Large ribosomal subunit protein uL4 (201 aa).

The interval 43-69 (TKAQKTRSEVAGGGKKPWRQKGTGRAR) is disordered.

The protein belongs to the universal ribosomal protein uL4 family. Part of the 50S ribosomal subunit.

Functionally, one of the primary rRNA binding proteins, this protein initially binds near the 5'-end of the 23S rRNA. It is important during the early stages of 50S assembly. It makes multiple contacts with different domains of the 23S rRNA in the assembled 50S subunit and ribosome. Forms part of the polypeptide exit tunnel. This Idiomarina loihiensis (strain ATCC BAA-735 / DSM 15497 / L2-TR) protein is Large ribosomal subunit protein uL4.